Reading from the N-terminus, the 2209-residue chain is Orsellinic acid synthase armB (2209 aa).

Positions 38-261 (LLLDACYYAF…HKTTVDALYH (224 aa)) are N-terminal acylcarrier protein transacylase domain (SAT). A Ketosynthase family 3 (KS3) domain is found at 391–817 (QEPIAICGMS…GSNGALLLEE (427 aa)). Catalysis depends on for beta-ketoacyl synthase activity residues Cys-561, His-696, and His-736. A malonyl-CoA:ACP transacylase (MAT) domain region spans residues 914–1239 (VFVFSGQGGQ…NLTLSSSLSQ (326 aa)). Residue Ser-1008 is the For acyl/malonyl transferase activity of the active site. The N-terminal hotdog fold stretch occupies residues 1306–1436 (MLQSWAQFPS…GQFRPLLVAD (131 aa)). A PKS/mFAS DH domain is found at 1306 to 1613 (MLQSWAQFPS…FKKLRLNTLQ (308 aa)). The product template (PT) domain stretch occupies residues 1335–1610 (ITGHIVGDVP…GMCFKKLRLN (276 aa)). His-1338 functions as the Proton acceptor; for dehydratase activity in the catalytic mechanism. The interval 1463-1613 (AEVITTRTAY…FKKLRLNTLQ (151 aa)) is C-terminal hotdog fold. Catalysis depends on Asp-1524, which acts as the Proton donor; for dehydratase activity. Carrier domains are found at residues 1659-1734 (VDVQ…SSTI) and 1844-1921 (SSSS…SSKQ). O-(pantetheine 4'-phosphoryl)serine is present on residues Ser-1693 and Ser-1881. Residues 1917–1945 (ISSKQPGKSPKPSEEATMDPDKEEDLSDL) are disordered. Positions 1932-1943 (ATMDPDKEEDLS) are enriched in acidic residues. The tract at residues 1962-2201 (VPMSVQKSSS…LGAVTQALVD (240 aa)) is thioesterase (TE) domain.

It carries out the reaction 3 malonyl-CoA + acetyl-CoA + 2 H(+) = orsellinate + 3 CO2 + 4 CoA. Its pathway is secondary metabolite biosynthesis. Its function is as follows. Non-reducing polyketide synthase, part of the gene cluster that mediates the biosynthesis of melleolides, a range of antifungal and phytotoxic polyketide derivatives composed of an orsellinic acid (OA) moiety esterified to various sesquiterpene alcohols. The first step in melleolides biosynthesis is performed by the delta(6)-protoilludene synthase PRO1 which catalyzes the cyclization of farnesyl diphosphate to protoilludene. The orsellinic acid synthase armB produces OA by condensing acetyl-CoA with 3 malonyl-CoA units in a three-round chain elongation reaction folowed by a C2-C7 ring closure. ArmB further catalyzes the trans-esterification of OA to the various sesquiterpene alcohols resulting from the hydroxylation of protoilludene. The melleolides cluster also includes 5 cytochrome P450 monooxygenases, 4 NAD(+)-dependent oxidoreductases, one flavin-dependent oxidoreductase, and one O-methyltransferase. The cytochrome P450 monooxygenases may be involved in protoilludene hydroxylation to elaborate melleolides with multiple alcohol groups, such as melleolide D, which carries alcohol functionalities at C-4, C-5, C-10, and C-13. The role of the NAD(+)-dependent enzymes remains unknown. Numerous melleolides, including arnamial, show 5'-O-methylation of the aromatic moiety which may be catalyzed by the methyltransferase encoded in the cluster. The flavin-dependent oxidoreductase might represent the dehydrogenase yielding the aldehyde in position 1 of arnamial and other melleolides. Finally, several halogenase localized outside of the cluster (armH1 to armH5), are able to catalyze the transfer of a single chlorine atom to the melleolide backbone, resulting in a 6'-chloromelleolide product. The chain is Orsellinic acid synthase armB from Armillaria mellea (Honey mushroom).